Reading from the N-terminus, the 978-residue chain is Sensor histidine kinase TodS (978 aa).

Positions 32–103 constitute a PAS 1 domain; sequence CEEHARIIFD…TQKRLVETAS (72 aa). The PAC 1 domain occupies 108 to 162; it reads VRCDVEILGKSGGREVIAVDFSLLPICNEEGSIVYLLAEGRNITDKKKAEAMLAL. Positions 187–405 constitute a Histidine kinase 1 domain; the sequence is KVSHELRTPL…LFQVKLPLNA (219 aa). The residue at position 190 (histidine 190) is a Phosphohistidine; by autocatalysis. A Response regulatory domain is found at 452-567; it reads RVLIVEDNPD…ELRARVSNLV (116 aa). Aspartate 500 carries the 4-aspartylphosphate modification. The region spanning 611–681 is the PAS 2 domain; the sequence is SEARWKAVYE…QRLANLLQGG (71 aa). The region spanning 685–737 is the PAC 2 domain; the sequence is YSVERSYLCKNGSTIWANASVSLMPQRVGESPVILQIIDDITEKKQAQENLNQ. Residues 757–974 enclose the Histidine kinase 2 domain; that stretch reads YIAHEINQPL…CFLVSIPARQ (218 aa). Phosphohistidine is present on histidine 760.

In terms of processing, autophosphorylated. Activation requires a sequential transfer of a phosphate group from a His in the primary transmitter domain, to an Asp in the receiver domain and to a His in the secondary transmitter domain.

Its subcellular location is the cytoplasm. The catalysed reaction is ATP + protein L-histidine = ADP + protein N-phospho-L-histidine.. Activity is regulated by agonists and antagonists. Binding of agonists such as toluene or benzene to TodS stimulates autophosphorylation at His-190. Activity is inhibited by antagonists such as o-xylene, o-chlorotoluene and trimethylbenzene isomers, which bind to TodS but do not stimulate autophosphorylation. Agonists and antagonists bind to the same PAS domain. Functionally, member of the two-component regulatory system TodS/TodT involved in the regulation of toluene degradation. Phosphorylates TodT via a four-step phosphorelay in response to toluene. Can also be induced by benzene and ethylbenzene. The sequence is that of Sensor histidine kinase TodS (todS) from Pseudomonas putida (strain DOT-T1E).